A 359-amino-acid polypeptide reads, in one-letter code: Type-1 angiotensin II receptor B (359 aa).

The Extracellular portion of the chain corresponds to 1 to 25 (MTLNSSTEDGIKRIQDDCPKAGRHN). Asparagine 4 carries N-linked (GlcNAc...) asparagine glycosylation. Glutamine 15 and aspartate 17 together coordinate angiotensin II. 2 cysteine pairs are disulfide-bonded: cysteine 18-cysteine 274 and cysteine 101-cysteine 180. The helical transmembrane segment at 26–55 (YIFVMIPTLYSIIFVVGIFGNSLVVIVIYF) threads the bilayer. Topologically, residues 56–61 (YMKLKT) are cytoplasmic. The helical transmembrane segment at 62–89 (VASVFLLNLALADLCFLLTLPLWAVYTA) threads the bilayer. The Extracellular segment spans residues 90–98 (MEYRWPFGN). Residues 99–125 (HLCKIASASVSFNLYASVFLLTCLSID) traverse the membrane as a helical segment. Topologically, residues 126 to 141 (RYLAIVHPMKSRLRRT) are cytoplasmic. A helical transmembrane segment spans residues 142–165 (MLVAKVTCIIIWLMAGLASLPAVI). Residues 166 to 190 (YRNVYFIENTNITVCAFHYESQNST) lie on the Extracellular side of the membrane. Angiotensin II is bound at residue arginine 167. Asparagine 176 carries N-linked (GlcNAc...) asparagine glycosylation. Phenylalanine 182, histidine 183, and tyrosine 184 together coordinate angiotensin II. N-linked (GlcNAc...) asparagine glycosylation occurs at asparagine 188. A helical transmembrane segment spans residues 191 to 216 (LPIGLGLTKNILGFVFPFLIILTSYT). Angiotensin II is bound at residue lysine 199. Residues 217–239 (LIWKALKKAYKIQKNTPRNDDIF) are Cytoplasmic-facing. A helical membrane pass occupies residues 240–268 (RIIMAIVLFFFFSWVPHQIFTFLDVLIQL). The Extracellular portion of the chain corresponds to 269–278 (GIIRDCEIAD). The helical transmembrane segment at 279-304 (IVDTAMPITICIAYFNNCLNPLFYGF) threads the bilayer. The Cytoplasmic segment spans residues 305 to 359 (LGKKFKKYFLQLLKYIPPTAKSHAGLSTKMSTLSYRPSDNMSSSAKKSASFFEVE). Residues 339–359 (YRPSDNMSSSAKKSASFFEVE) are disordered. Residues 346 to 359 (SSSAKKSASFFEVE) show a composition bias toward low complexity.

This sequence belongs to the G-protein coupled receptor 1 family. As to quaternary structure, interacts with MAS1. Interacts with ARRB1. Interacts with FLNA (via filamin repeat 21); increases PKA-mediated phosphorylation of FLNA. Post-translationally, C-terminal Ser or Thr residues may be phosphorylated. Is expressed in the liver, kidney, aorta, lung, uterus, ovary, spleen, heart, and vascular smooth muscle cell. Expressed most abundantly in the adrenal gland.

The protein localises to the cell membrane. Functionally, receptor for angiotensin II, a vasoconstricting peptide, which acts as a key regulator of blood pressure and sodium retention by the kidney. The activated receptor in turn couples to G-alpha proteins G(q) (GNAQ, GNA11, GNA14 or GNA15) and thus activates phospholipase C and increases the cytosolic Ca(2+) concentrations, which in turn triggers cellular responses such as stimulation of protein kinase C. In Rattus norvegicus (Rat), this protein is Type-1 angiotensin II receptor B (Agtr1b).